A 430-amino-acid chain; its full sequence is Enolase (430 aa).

Residue Gln-165 participates in (2R)-2-phosphoglycerate binding. Catalysis depends on Glu-207, which acts as the Proton donor. 3 residues coordinate Mg(2+): Asp-244, Glu-287, and Asp-314. Lys-339, Arg-368, Ser-369, and Lys-390 together coordinate (2R)-2-phosphoglycerate. Lys-339 acts as the Proton acceptor in catalysis.

This sequence belongs to the enolase family. As to quaternary structure, component of the RNA degradosome, a multiprotein complex involved in RNA processing and mRNA degradation. Requires Mg(2+) as cofactor.

The protein localises to the cytoplasm. The protein resides in the secreted. It localises to the cell surface. It catalyses the reaction (2R)-2-phosphoglycerate = phosphoenolpyruvate + H2O. It participates in carbohydrate degradation; glycolysis; pyruvate from D-glyceraldehyde 3-phosphate: step 4/5. Functionally, catalyzes the reversible conversion of 2-phosphoglycerate (2-PG) into phosphoenolpyruvate (PEP). It is essential for the degradation of carbohydrates via glycolysis. This chain is Enolase, found in Stenotrophomonas maltophilia (strain R551-3).